The following is a 293-amino-acid chain: Probable porphobilinogen deaminase (293 aa).

At Cys-233 the chain carries S-(dipyrrolylmethanemethyl)cysteine.

The protein belongs to the HMBS family. Dipyrromethane serves as cofactor.

The enzyme catalyses 4 porphobilinogen + H2O = hydroxymethylbilane + 4 NH4(+). It participates in porphyrin-containing compound metabolism; protoporphyrin-IX biosynthesis; coproporphyrinogen-III from 5-aminolevulinate: step 2/4. Tetrapolymerization of the monopyrrole PBG into the hydroxymethylbilane pre-uroporphyrinogen in several discrete steps. The sequence is that of Probable porphobilinogen deaminase from Saccharolobus islandicus (strain Y.G.57.14 / Yellowstone #1) (Sulfolobus islandicus).